We begin with the raw amino-acid sequence, 28 residues long: Cyclotide vodo I1 (28 aa).

Cystine bridges form between cysteine 4-cysteine 18, cysteine 8-cysteine 20, and cysteine 13-cysteine 25.

In terms of processing, this is a cyclic peptide. Contains 3 disulfide bonds.

Probably participates in a plant defense mechanism. This Viola odorata (Sweet violet) protein is Cyclotide vodo I1.